The following is a 519-amino-acid chain: MSVILLAIPTLFIGFISYYLWIWTYWRRRGIPGPLGYPLVGSFPKTLKSEYPQYLQIRDWTKLYGPIYGYTEGTIKTLIVSDIDIVRQIFVEQYDNFYGRKLNPIQGDPEKDERTNLFSAQGFRWKRLRAISSPTFSNNSLRKINVTVEDSAMELLRHIEEQTSEGQQIDMLQFYQEFTMDTIGRIAMGQTDSQMFKNPLLKFVRAIFGDNRKHIPLIGGVFPTLAQVFRFFMLKFPLLGAANFIHVNKTVVTAVQNRIDQRENDRKNGIEIGEPQDFIDLFLEARADDVEHFQENNGDFSKTSSYGNRQLTTQEIVGQCLVFLIAGFDTTALSLSYTTFLLATHPEVQKKLQEEIERECIEPSISFDHLSKLKYMDCIIKETLRLYPLGTMANSRRCMRATKLGNVEVEVGTMVQVDTWSLHTDTKIWGDDAKEFKPERWLDPNCDQVFQKGGYISFGLGPRQCVGMRLAYMEEKMLLAHILRKYTFEVGTKTEIPLKLVGRATTQPETVWMHLKQRI.

A helical membrane pass occupies residues 3 to 23; the sequence is VILLAIPTLFIGFISYYLWIW. Cys-465 is a heme binding site.

Belongs to the cytochrome P450 family. Requires heme as cofactor.

The protein localises to the membrane. Cytochromes P450 are a group of heme-thiolate monooxygenases. They oxidize a variety of structurally unrelated compounds, including steroids, fatty acids, and xenobiotics. This Caenorhabditis elegans protein is Putative cytochrome P450 CYP13A10 (cyp-13A10).